We begin with the raw amino-acid sequence, 327 residues long: Chain length determinant protein (327 aa).

The Cytoplasmic segment spans residues 1 to 31 (MTVDSNTSSGRGNDPEQIDLIELLLQLWRGK). Residues 32 to 52 (MTIIVAVIIAILLAVGYLMIA) traverse the membrane as a helical segment. Topologically, residues 53–294 (KEKWTSTAII…LPVRRDSPKT (242 aa)) are periplasmic. The helical transmembrane segment at 295–315 (AITLVLAVLLGGMIGAGIVLG) threads the bilayer. Over 316 to 327 (RNALRSYKPKAL) the chain is Cytoplasmic.

This sequence belongs to the WzzB/Cld/Rol family.

The protein resides in the cell inner membrane. The protein operates within bacterial outer membrane biogenesis; lipopolysaccharide biosynthesis. Its function is as follows. Confers a modal distribution of chain length on the O-antigen component of lipopolysaccharide (LPS). Gives rise to a reduced number of short chain molecules and increases in numbers of longer molecules, with a modal value of 20. The sequence is that of Chain length determinant protein (wzzB) from Salmonella typhimurium (strain LT2 / SGSC1412 / ATCC 700720).